Reading from the N-terminus, the 204-residue chain is Altered inheritance of mitochondria protein 20 (204 aa).

A helical transmembrane segment spans residues 6–26; the sequence is VAVGTAVGIPIAVGVIIALIF.

This sequence belongs to the SKG1 family.

Its subcellular location is the vacuole membrane. Functionally, involved in cell cycle progression and surviving DNA damage. This is Altered inheritance of mitochondria protein 20 (AIM20) from Saccharomyces cerevisiae (strain JAY291) (Baker's yeast).